A 416-amino-acid chain; its full sequence is D-amino acid dehydrogenase (416 aa).

An FAD-binding site is contributed by 3-17; that stretch reads VIVLGAGIVGVTSAY.

It belongs to the DadA oxidoreductase family. FAD is required as a cofactor.

It carries out the reaction a D-alpha-amino acid + A + H2O = a 2-oxocarboxylate + AH2 + NH4(+). It participates in amino-acid degradation; D-alanine degradation; NH(3) and pyruvate from D-alanine: step 1/1. Oxidative deamination of D-amino acids. The polypeptide is D-amino acid dehydrogenase (Rhizobium johnstonii (strain DSM 114642 / LMG 32736 / 3841) (Rhizobium leguminosarum bv. viciae)).